A 461-amino-acid chain; its full sequence is Ribosomal protein uS12 methylthiotransferase RimO (461 aa).

The MTTase N-terminal domain maps to 13 to 128; it reads PKVGFVSLGC…VMQHVHMHLP (116 aa). [4Fe-4S] cluster contacts are provided by Cys-22, Cys-58, Cys-87, Cys-159, Cys-163, and Cys-166. Residues 145–390 form the Radical SAM core domain; it reads LTPRHYAYLK…MEVAEEVSAK (246 aa). The TRAM domain maps to 393–461; sequence AKKVGKTLKV…ADGHDLWGEV (69 aa).

This sequence belongs to the methylthiotransferase family. RimO subfamily. Requires [4Fe-4S] cluster as cofactor.

It is found in the cytoplasm. The enzyme catalyses L-aspartate(89)-[ribosomal protein uS12]-hydrogen + (sulfur carrier)-SH + AH2 + 2 S-adenosyl-L-methionine = 3-methylsulfanyl-L-aspartate(89)-[ribosomal protein uS12]-hydrogen + (sulfur carrier)-H + 5'-deoxyadenosine + L-methionine + A + S-adenosyl-L-homocysteine + 2 H(+). Its function is as follows. Catalyzes the methylthiolation of an aspartic acid residue of ribosomal protein uS12. The protein is Ribosomal protein uS12 methylthiotransferase RimO of Paraburkholderia xenovorans (strain LB400).